Here is a 388-residue protein sequence, read N- to C-terminus: Branched-chain-amino-acid aminotransferase 2, chloroplastic (388 aa).

The N-terminal 22 residues, 1 to 22, are a transit peptide targeting the chloroplast; that stretch reads MIKTITSLRKTLVLPLHLHIRT. K235 is subject to N6-(pyridoxal phosphate)lysine.

This sequence belongs to the class-IV pyridoxal-phosphate-dependent aminotransferase family. The cofactor is pyridoxal 5'-phosphate.

The protein localises to the plastid. It is found in the chloroplast. The enzyme catalyses L-leucine + 2-oxoglutarate = 4-methyl-2-oxopentanoate + L-glutamate. It carries out the reaction L-isoleucine + 2-oxoglutarate = (S)-3-methyl-2-oxopentanoate + L-glutamate. The catalysed reaction is L-valine + 2-oxoglutarate = 3-methyl-2-oxobutanoate + L-glutamate. It functions in the pathway amino-acid biosynthesis; L-isoleucine biosynthesis; L-isoleucine from 2-oxobutanoate: step 4/4. Its pathway is amino-acid biosynthesis; L-leucine biosynthesis; L-leucine from 3-methyl-2-oxobutanoate: step 4/4. The protein operates within amino-acid biosynthesis; L-valine biosynthesis; L-valine from pyruvate: step 4/4. In terms of biological role, converts 2-oxo acids to branched-chain amino acids. Shows activity with L-Leu, L-Ile and L-Val as amino donors and 2-oxoglutarate as an amino acceptor, but no activity for D-isomers of Leu, Ile, Val, Asp, Glu or Ala. The polypeptide is Branched-chain-amino-acid aminotransferase 2, chloroplastic (BCAT2) (Arabidopsis thaliana (Mouse-ear cress)).